Consider the following 325-residue polypeptide: Lipoyl synthase (325 aa).

[4Fe-4S] cluster-binding residues include Cys66, Cys71, Cys77, Cys92, Cys96, Cys99, and Ser303. Positions 78-292 constitute a Radical SAM core domain; the sequence is WEDREATFLI…AQFAEGLGFA (215 aa).

This sequence belongs to the radical SAM superfamily. Lipoyl synthase family. It depends on [4Fe-4S] cluster as a cofactor.

It localises to the cytoplasm. The catalysed reaction is [[Fe-S] cluster scaffold protein carrying a second [4Fe-4S](2+) cluster] + N(6)-octanoyl-L-lysyl-[protein] + 2 oxidized [2Fe-2S]-[ferredoxin] + 2 S-adenosyl-L-methionine + 4 H(+) = [[Fe-S] cluster scaffold protein] + N(6)-[(R)-dihydrolipoyl]-L-lysyl-[protein] + 4 Fe(3+) + 2 hydrogen sulfide + 2 5'-deoxyadenosine + 2 L-methionine + 2 reduced [2Fe-2S]-[ferredoxin]. The protein operates within protein modification; protein lipoylation via endogenous pathway; protein N(6)-(lipoyl)lysine from octanoyl-[acyl-carrier-protein]: step 2/2. Functionally, catalyzes the radical-mediated insertion of two sulfur atoms into the C-6 and C-8 positions of the octanoyl moiety bound to the lipoyl domains of lipoate-dependent enzymes, thereby converting the octanoylated domains into lipoylated derivatives. This chain is Lipoyl synthase, found in Mycobacterium sp. (strain JLS).